A 36-amino-acid polypeptide reads, in one-letter code: Glucagon-1 (36 aa).

It belongs to the glucagon family.

It localises to the secreted. Its function is as follows. Promotes hydrolysis of glycogen and lipids, and raises the blood sugar level. The sequence is that of Glucagon-1 (gcg1) from Oreochromis niloticus (Nile tilapia).